A 358-amino-acid polypeptide reads, in one-letter code: Phenylalanine--tRNA ligase alpha subunit (358 aa).

Glu258 lines the Mg(2+) pocket.

This sequence belongs to the class-II aminoacyl-tRNA synthetase family. Phe-tRNA synthetase alpha subunit type 1 subfamily. Tetramer of two alpha and two beta subunits. Requires Mg(2+) as cofactor.

It localises to the cytoplasm. It carries out the reaction tRNA(Phe) + L-phenylalanine + ATP = L-phenylalanyl-tRNA(Phe) + AMP + diphosphate + H(+). This chain is Phenylalanine--tRNA ligase alpha subunit, found in Rhodospirillum rubrum (strain ATCC 11170 / ATH 1.1.1 / DSM 467 / LMG 4362 / NCIMB 8255 / S1).